Consider the following 128-residue polypeptide: Nanos homolog 1 (128 aa).

Positions 7–23 are essential for its translational repressor activity; that stretch reads FDSWSDYLGLSSLISRG. Residues 25 to 52 are disordered; that stretch reads QPQREGERPRWDVLSPASAEPLPSNESV. Residues 56 to 110 form a Nanos-type zinc finger; that stretch reads GCGFCRSNREALSLYTSHRLRALDGRVLCPVLRGYTCPLCGANGDWAHTMRYCPL. 8 residues coordinate Zn(2+): C57, C60, H73, C84, C92, C95, H103, and C108. 2 consecutive short sequence motifs (C2HC) follow at residues 57-84 and 92-108; these read CGFC…RVLC and CPLC…MRYC.

This sequence belongs to the nanos family. As to quaternary structure, interacts with ccnb1. As to expression, ovary and testis.

The protein localises to the cytoplasm. The protein resides in the perinuclear region. Functionally, acts as a translational repressor. Can mediate repression affecting different steps in the translation process: cap-driven, IRES-driven, polyadenylated RNAs or nonpolyadenylated RNAs. Essential for the development of primordial germ cells (PGCs) by ensuring their proper migration and survival. This is Nanos homolog 1 (nanos1) from Xenopus laevis (African clawed frog).